The chain runs to 243 residues: DNA repair protein RecO (243 aa).

Belongs to the RecO family.

In terms of biological role, involved in DNA repair and RecF pathway recombination. The protein is DNA repair protein RecO of Bartonella quintana (strain Toulouse) (Rochalimaea quintana).